The sequence spans 262 residues: pFDCC methylesterase MES16 (262 aa).

Catalysis depends on Ser87, which acts as the Acyl-ester intermediate. Catalysis depends on charge relay system residues Asp211 and His239.

The protein belongs to the AB hydrolase superfamily. Methylesterase family.

It is found in the cytoplasm. It carries out the reaction methyl (indol-3-yl)acetate + H2O = (indol-3-yl)acetate + methanol + H(+). It catalyses the reaction methyl (-)-jasmonate + H2O = jasmonate + methanol + H(+). The enzyme catalyses primary fluorescent dioxobilin-type chlorophyll catabolite + H2O = O13(4)-desmethyl pFDCC + methanol + H(+). It participates in plant hormone biosynthesis. It functions in the pathway lipid metabolism; oxylipin biosynthesis. Its pathway is porphyrin-containing compound metabolism; chlorophyll degradation. Functionally, involved in the chlorophyll breakdown by its action in fluorescent chlorophyll catabolites (FCCs) demethylation. Demethylates the C13(2)-carboxymethyl group present at the isocyclic ring of chlorophyll. Uses primary fluorescent dioxobilin-type chlorophyll catabolite (pFDCC) as substrate to produce O13(4)-desmethyl pFDCC. Also able to catalyze pheophorbides in vitro. Methylesterase shown to have carboxylesterase activity, methyl indole-3-acetic acid (MeIAA) esterase activity and methyl jasmonate (MeJA) esterase activity in vitro. The protein is pFDCC methylesterase MES16 of Arabidopsis thaliana (Mouse-ear cress).